A 248-amino-acid chain; its full sequence is DNA repair protein RecO (248 aa).

The protein belongs to the RecO family.

In terms of biological role, involved in DNA repair and RecF pathway recombination. The polypeptide is DNA repair protein RecO (Bacillus cereus (strain 03BB102)).